We begin with the raw amino-acid sequence, 381 residues long: MPFGNTHNKFKLNYKPEEEYPDLSKHNNHMAKVLTLELYKKLRDKETPSGFTVDDVIQTGVDNPGHPFIMTVGCVAGDEESYEVFKELFDPIISDRHGGYKPTDKHKTDLNHENLKGGDDLDPNYVLSSRVRTGRSIKGYTLPPHCSRGERRAVEKLSVEALNSLTGEFKGKYYPLKSMTEKEQQQLIDDHFLFDKPVSPLLLASGMARDWPDARGIWHNDNKSFLVWVNEEDHLRVISMEKGGNMKEVFRRFCVGLQKIEEIFKKAGHPFMWNQHLGYVLTCPSNLGTGLRGGVHVKLAHLSKHPKFEEILTRLRLQKRGTGGVDTAAVGSVFDVSNADRLGSSEVEQVQLVVDGVKLMVEMEKKLEKGQSIDDMIPAQK.

A Phosphagen kinase N-terminal domain is found at 11–98; it reads KLNYKPEEEY…FDPIISDRHG (88 aa). The Phosphagen kinase C-terminal domain occupies 125-367; sequence YVLSSRVRTG…KLMVEMEKKL (243 aa). 128 to 132 contacts ATP; it reads SSRVR. Ser-164 carries the post-translational modification Phosphoserine. Position 166 is a phosphothreonine (Thr-166). The residue at position 178 (Ser-178) is a Phosphoserine. A Phosphothreonine modification is found at Thr-180. Position 191 (His-191) interacts with ATP. Ser-199 is modified (phosphoserine). Arg-236 and Arg-292 together coordinate ATP. Residues Thr-313 and Thr-322 each carry the phosphothreonine modification. Residues 320–325 and Asp-335 each bind ATP; that span reads RGTGGV. Residue Ser-372 is modified to Phosphoserine.

The protein belongs to the ATP:guanido phosphotransferase family. Dimer of identical or non-identical chains, which can be either B (brain type) or M (muscle type). With MM being the major form in skeletal muscle and myocardium, MB existing in myocardium, and BB existing in many tissues, especially brain.

It is found in the cytoplasm. The catalysed reaction is creatine + ATP = N-phosphocreatine + ADP + H(+). Functionally, reversibly catalyzes the transfer of phosphate between ATP and various phosphogens (e.g. creatine phosphate). Creatine kinase isoenzymes play a central role in energy transduction in tissues with large, fluctuating energy demands, such as skeletal muscle, heart, brain and spermatozoa. The sequence is that of Creatine kinase M-type (CKM) from Homo sapiens (Human).